Here is a 733-residue protein sequence, read N- to C-terminus: Hypermethylated in cancer 1 protein (733 aa).

Residues 47–110 (CDVIIVVQNA…IYTGRLADGA (64 aa)) form the BTB domain. The interval 154-315 (KYCHLRGGGG…PFRGGSGSPG (162 aa)) is mediates HDAC-dependent transcriptional repression. Arg-159 is modified (omega-N-methylarginine). Positions 189-209 (YPSPVGPPPPPAAEPPSGPEA) are disordered. Pro residues predominate over residues 192 to 206 (PVGPPPPPAAEPPSG). Phosphoserine is present on Ser-237. Residues 241–247 (GLDLSKK) form an interaction with CTBP1 region. A disordered region spans residues 241–421 (GLDLSKKSPP…PGGHLEGYPC (181 aa)). The residue at position 248 (Ser-248) is a Phosphoserine. Positions 284 to 293 (LALPSLPPLP) are enriched in pro residues. Position 333 is an N6-acetyllysine; alternate (Lys-333). Lys-333 is covalently cross-linked (Glycyl lysine isopeptide (Lys-Gly) (interchain with G-Cter in SUMO); alternate). Residues 344 to 361 (ELGRERGSPSERCEERGG) are compositionally biased toward basic and acidic residues. Ser-366 is subject to Phosphoserine. A compositionally biased stretch (pro residues) spans 368–380 (GGPPLGLAPPPRY). 5 consecutive C2H2-type zinc fingers follow at residues 439–459 (CIPCGKGFPSSEQLNAHVEAH), 509–529 (CASCDKSYKDPATLRQHEKTH), 537–557 (CTICGKKFTQRGTMTRHMRSH), 565–585 (CDACGMRFTRQYRLTEHMRIH), and 593–613 (CQVCGGKFAQQRNLISHMKMH). Residue Ser-704 is modified to Phosphoserine.

Belongs to the krueppel C2H2-type zinc-finger protein family. Hic subfamily. In terms of assembly, self-associates. Interacts with HIC2. Interacts with CTBP1 and CTBP2. Interacts with TCF7L2 and ARID1A. Interacts with MTA1 and MBD3; indicative for an association with the NuRD complex. Interacts with SIRT1. In terms of processing, acetylated on several residues, including Lys-333. Lys-333 is deacetylated by SIRT1. Sumoylated on Lys-333 by a PIAS family member, which enhances interaction with MTA1, positively regulates transcriptional repression activity and is enhanced by HDAC4. In terms of tissue distribution, ubiquitously expressed with highest levels found in lung, colon, prostate, thymus, testis and ovary. Expression is absent or decreased in many tumor cells.

The protein resides in the nucleus. Functionally, transcriptional repressor. Recognizes and binds to the consensus sequence '5-[CG]NG[CG]GGGCA[CA]CC-3'. May act as a tumor suppressor. Involved in development of head, face, limbs and ventral body wall. Involved in down-regulation of SIRT1 and thereby is involved in regulation of p53/TP53-dependent apoptotic DNA-damage responses. The specific target gene promoter association seems to be depend on corepressors, such as CTBP1 or CTBP2 and MTA1. In cooperation with MTA1 (indicative for an association with the NuRD complex) represses transcription from CCND1/cyclin-D1 and CDKN1C/p57Kip2 specifically in quiescent cells. Involved in regulation of the Wnt signaling pathway probably by association with TCF7L2 and preventing TCF7L2 and CTNNB1 association with promoters of TCF-responsive genes. Seems to repress transcription from E2F1 and ATOH1 which involves ARID1A, indicative for the participation of a distinct SWI/SNF-type chromatin-remodeling complex. Probably represses transcription of ACKR3, FGFBP1 and EFNA1. The chain is Hypermethylated in cancer 1 protein (HIC1) from Homo sapiens (Human).